The following is a 538-amino-acid chain: SWM histone demethylase complex subunit phf2 (538 aa).

3 disordered regions span residues 28 to 47 (RFPN…NQNG), 98 to 150 (EIES…SSPL), and 198 to 222 (TKSG…RRRG). The span at 98–111 (EIESSKNQETDAKS) shows a compositional bias: basic and acidic residues. The segment at 232–288 (AMKCSVCQRLQSPPKNRIVFCDGCNTPFHQLCHEPYISDELLDSPNGEWFCDDCIRR) adopts a PHD-type zinc-finger fold. Residues 367-392 (GDQYLSLNNGTESQSKTTKHSTSLPS) are compositionally biased toward polar residues. A disordered region spans residues 367 to 396 (GDQYLSLNNGTESQSKTTKHSTSLPSTEPV).

Component of the SWM histone demethylase complex composed of at least lsd1, lsd2, phf1 and phf2.

The protein resides in the nucleus. Functionally, component of the SWM histone demethylase complex that specifically demethylates H3K9me2, a specific tag for epigenetic transcriptional activation, thereby acting as a corepressor. Has a role in regulating heterochromatin propagation and euchromatic transcription. In Schizosaccharomyces pombe (strain 972 / ATCC 24843) (Fission yeast), this protein is SWM histone demethylase complex subunit phf2 (phf2).